We begin with the raw amino-acid sequence, 206 residues long: Large ribosomal subunit protein uL4 (206 aa).

It belongs to the universal ribosomal protein uL4 family. Part of the 50S ribosomal subunit.

Its function is as follows. One of the primary rRNA binding proteins, this protein initially binds near the 5'-end of the 23S rRNA. It is important during the early stages of 50S assembly. It makes multiple contacts with different domains of the 23S rRNA in the assembled 50S subunit and ribosome. Forms part of the polypeptide exit tunnel. The sequence is that of Large ribosomal subunit protein uL4 from Rhodopseudomonas palustris (strain BisA53).